Here is a 311-residue protein sequence, read N- to C-terminus: MKYADISLRLYMVFLRKYLESCGCEPDLIALIRLISRQMDPIRKAFLDNQMYEHTLNASGELQAQMDTWADEHLIKVVGESGLVRELASEEQADIIRFENSRCEYCMVMDPLDGSSLISTNLAVGTIVGIYENGGVLQPGSKLRAAFYTLFGPLTVLVVSVGKGVQSFAWDPESEHYLLLKDHFSVPEGKQYGTGGVRNEWLLPHLKVIEYFDQNGFKIRYSGSFVADCHQLLVYGGIYTYPGSEKSPNGKFRLLFEANPLGFIITQAGGRITDGRRNILNIVPEKHHQKTPVYIGSKGIIEKIEEIYKNL.

The Mg(2+) site is built by glutamate 90, aspartate 110, leucine 112, and aspartate 113. Substrate-binding positions include 113–116 (DGSS), tyrosine 221, and lysine 251. Glutamate 257 provides a ligand contact to Mg(2+).

Belongs to the FBPase class 1 family. Homotetramer. Mg(2+) serves as cofactor.

The protein resides in the cytoplasm. The enzyme catalyses beta-D-fructose 1,6-bisphosphate + H2O = beta-D-fructose 6-phosphate + phosphate. It functions in the pathway carbohydrate biosynthesis; gluconeogenesis. This is Fructose-1,6-bisphosphatase class 1 from Methanospirillum hungatei JF-1 (strain ATCC 27890 / DSM 864 / NBRC 100397 / JF-1).